The primary structure comprises 156 residues: Small ribosomal subunit protein uS7 (156 aa).

It belongs to the universal ribosomal protein uS7 family. As to quaternary structure, part of the 30S ribosomal subunit. Contacts proteins S9 and S11.

Its function is as follows. One of the primary rRNA binding proteins, it binds directly to 16S rRNA where it nucleates assembly of the head domain of the 30S subunit. Is located at the subunit interface close to the decoding center, probably blocks exit of the E-site tRNA. The protein is Small ribosomal subunit protein uS7 of Leuconostoc mesenteroides subsp. mesenteroides (strain ATCC 8293 / DSM 20343 / BCRC 11652 / CCM 1803 / JCM 6124 / NCDO 523 / NBRC 100496 / NCIMB 8023 / NCTC 12954 / NRRL B-1118 / 37Y).